The chain runs to 183 residues: Translation initiation factor IF-3 (183 aa).

Belongs to the IF-3 family. As to quaternary structure, monomer.

It is found in the cytoplasm. IF-3 binds to the 30S ribosomal subunit and shifts the equilibrium between 70S ribosomes and their 50S and 30S subunits in favor of the free subunits, thus enhancing the availability of 30S subunits on which protein synthesis initiation begins. This is Translation initiation factor IF-3 from Yersinia enterocolitica serotype O:8 / biotype 1B (strain NCTC 13174 / 8081).